Reading from the N-terminus, the 118-residue chain is Small ribosomal subunit protein uS19c (118 aa).

Residues 92-118 (KKSSKKVTKNKKSIKKNIKTTSKKFKK) form a disordered region.

This sequence belongs to the universal ribosomal protein uS19 family.

It localises to the plastid. Functionally, protein S19 forms a complex with S13 that binds strongly to the 16S ribosomal RNA. The polypeptide is Small ribosomal subunit protein uS19c (rps19) (Euglena longa (Euglenophycean alga)).